We begin with the raw amino-acid sequence, 555 residues long: CTP synthase (555 aa).

The amidoligase domain stretch occupies residues 1–270 (MTKFVFVTGG…DGLICDKLRL (270 aa)). CTP is bound at residue Ser-13. Ser-13 contributes to the UTP binding site. ATP is bound by residues 14 to 19 (SLGKGI) and Asp-71. Residues Asp-71 and Glu-144 each coordinate Mg(2+). Residues 151–153 (DIE), 191–196 (KTKPTQ), and Lys-227 contribute to the CTP site. UTP-binding positions include 191-196 (KTKPTQ) and Lys-227. Residues 295 to 547 (NIVMVGKYVE…IKAALDHQAA (253 aa)) form the Glutamine amidotransferase type-1 domain. Gly-356 provides a ligand contact to L-glutamine. Cys-383 functions as the Nucleophile; for glutamine hydrolysis in the catalytic mechanism. Residues 384 to 387 (LGMQ), Glu-407, and Arg-473 each bind L-glutamine. Active-site residues include His-520 and Glu-522.

This sequence belongs to the CTP synthase family. As to quaternary structure, homotetramer.

It catalyses the reaction UTP + L-glutamine + ATP + H2O = CTP + L-glutamate + ADP + phosphate + 2 H(+). The enzyme catalyses L-glutamine + H2O = L-glutamate + NH4(+). It carries out the reaction UTP + NH4(+) + ATP = CTP + ADP + phosphate + 2 H(+). Its pathway is pyrimidine metabolism; CTP biosynthesis via de novo pathway; CTP from UDP: step 2/2. With respect to regulation, allosterically activated by GTP, when glutamine is the substrate; GTP has no effect on the reaction when ammonia is the substrate. The allosteric effector GTP functions by stabilizing the protein conformation that binds the tetrahedral intermediate(s) formed during glutamine hydrolysis. Inhibited by the product CTP, via allosteric rather than competitive inhibition. Functionally, catalyzes the ATP-dependent amination of UTP to CTP with either L-glutamine or ammonia as the source of nitrogen. Regulates intracellular CTP levels through interactions with the four ribonucleotide triphosphates. This Albidiferax ferrireducens (strain ATCC BAA-621 / DSM 15236 / T118) (Rhodoferax ferrireducens) protein is CTP synthase.